Consider the following 96-residue polypeptide: Cell division protein FtsB (96 aa).

Residues 1–11 lie on the Cytoplasmic side of the membrane; it reads MDIKSNSFFYI. Residues 12-29 traverse the membrane as a helical segment; sequence FISVVLLLIAILQYDLWF. Residues 30-96 are Periplasmic-facing; sequence SNTGFIKYQA…KQGEVFYSVK (67 aa).

This sequence belongs to the FtsB family. Part of a complex composed of FtsB, FtsL and FtsQ.

The protein resides in the cell inner membrane. Functionally, essential cell division protein. May link together the upstream cell division proteins, which are predominantly cytoplasmic, with the downstream cell division proteins, which are predominantly periplasmic. The chain is Cell division protein FtsB from Francisella tularensis subsp. tularensis (strain SCHU S4 / Schu 4).